We begin with the raw amino-acid sequence, 95 residues long: Beta-defensin 132 (95 aa).

The signal sequence occupies residues 1-22 (MKFLLLVLAALGFLTQVIPASG). 3 disulfides stabilise this stretch: cysteine 27–cysteine 55, cysteine 35–cysteine 49, and cysteine 39–cysteine 56. The tract at residues 72–95 (GNHWPSRSRNTQRKNKKQQTTVTP) is disordered.

This sequence belongs to the beta-defensin family.

The protein localises to the secreted. Functionally, has antibacterial activity. The chain is Beta-defensin 132 (DEFB132) from Macaca fascicularis (Crab-eating macaque).